A 505-amino-acid polypeptide reads, in one-letter code: MAEFQGYLELDRSWKHDLLYPLIFREYIYVFAHDLGLNRSNLLENVGYDNKSSLLIVKRLISRMYQQNHFIISANDSNQNQLFGYNKNLYSQMISEGFAVIVEIPFSLRLVSSLKGTEIVKYYNLRSIHSIFPFLEDKFSQLNYVSDVLIPYPIHLEILVQTLRYWVKDASSLHLLRFFLHDYYNWNTLIIPNKYISIFSKSNPRLFLFLYNSHVCEYESILLFLRNQSSHLRLTSSGGFFERIYFYGKIKHPVEEVFANDSPTSLWFLEDLFMHYVRYQGKSILASKDTPLFMNKWKYYLVLLWQCHFYVWSQPGRMYINQLCKHSFSFLGYLSSMQINLSVVRSQMLENSFLMDNAMKKIDTLVPISLLIGSLDKMKFCNVLGHPVSKSTWADSSDFDIIDRFVCICRNLFHYYSGSSKKKSLYRIKYILRLSCVKTLARKHKSTVRTFLKKLGSNLLEEFFTEEEEVLSLIFPRTYSALRRSYKGRIWYLDIFCINDLVNHK.

This sequence belongs to the intron maturase 2 family. MatK subfamily.

It localises to the plastid. Its subcellular location is the chloroplast. Its function is as follows. Usually encoded in the trnK tRNA gene intron. Probably assists in splicing its own and other chloroplast group II introns. This is Maturase K from Morus indica (Mulberry).